Here is a 360-residue protein sequence, read N- to C-terminus: Phospho-N-acetylmuramoyl-pentapeptide-transferase (360 aa).

The next 10 helical transmembrane spans lie at 27-47, 73-93, 97-117, 132-152, 164-184, 199-219, 236-256, 263-283, 288-308, and 337-357; these read ILSVLTALFIAFWVGPIMIRM, TMGGALILVAIVISTLLWGDL, FVWITLGVLFVFGAVGWVDDW, WKYLWLSVGALGAGCALFFTA, FFKSVAINMGWFYIVLTYFVI, GLAIMPTVLVGGALGIFAYAG, AGELVIISAALCGAGLGFLWF, VFMGDVGALSLGAVLGVMAVI, IVLFIMGGVFVMETVSVMLQV, and KIIVRFWIITVILVLVGLATL.

The protein belongs to the glycosyltransferase 4 family. MraY subfamily. Mg(2+) is required as a cofactor.

It localises to the cell inner membrane. The catalysed reaction is UDP-N-acetyl-alpha-D-muramoyl-L-alanyl-gamma-D-glutamyl-meso-2,6-diaminopimeloyl-D-alanyl-D-alanine + di-trans,octa-cis-undecaprenyl phosphate = di-trans,octa-cis-undecaprenyl diphospho-N-acetyl-alpha-D-muramoyl-L-alanyl-D-glutamyl-meso-2,6-diaminopimeloyl-D-alanyl-D-alanine + UMP. The protein operates within cell wall biogenesis; peptidoglycan biosynthesis. Its function is as follows. Catalyzes the initial step of the lipid cycle reactions in the biosynthesis of the cell wall peptidoglycan: transfers peptidoglycan precursor phospho-MurNAc-pentapeptide from UDP-MurNAc-pentapeptide onto the lipid carrier undecaprenyl phosphate, yielding undecaprenyl-pyrophosphoryl-MurNAc-pentapeptide, known as lipid I. The chain is Phospho-N-acetylmuramoyl-pentapeptide-transferase from Alcanivorax borkumensis (strain ATCC 700651 / DSM 11573 / NCIMB 13689 / SK2).